The chain runs to 245 residues: Aliphatic sulfonates import ATP-binding protein SsuB (245 aa).

Residues 6–225 form the ABC transporter domain; it reads VTVRGLRRAF…SRGDEGFDDL (220 aa). 38–45 lines the ATP pocket; the sequence is GLSGSGKS.

The protein belongs to the ABC transporter superfamily. Aliphatic sulfonates importer (TC 3.A.1.17.2) family. As to quaternary structure, the complex is composed of two ATP-binding proteins (SsuB), two transmembrane proteins (SsuC) and a solute-binding protein (SsuA).

Its subcellular location is the cell membrane. The catalysed reaction is ATP + H2O + aliphatic sulfonate-[sulfonate-binding protein]Side 1 = ADP + phosphate + aliphatic sulfonateSide 2 + [sulfonate-binding protein]Side 1.. Functionally, part of the ABC transporter complex SsuABC involved in aliphatic sulfonates import. Responsible for energy coupling to the transport system. The sequence is that of Aliphatic sulfonates import ATP-binding protein SsuB from Mycobacterium sp. (strain MCS).